A 393-amino-acid polypeptide reads, in one-letter code: Sugar efflux transporter B (393 aa).

12 consecutive transmembrane segments (helical) span residues 13-33 (FDLT…AGAL), 52-72 (MVGF…QFLA), 84-101 (LIVF…LFAW), 105-124 (YFIL…TANP), 152-172 (VSLA…GFSF), 174-194 (VMYL…WFFL), 219-239 (LLLF…IINM), 253-273 (LAGV…LIAG), 283-303 (LLMC…LLAH), 308-328 (LLGL…IGML), 344-364 (LYTN…GIAA), and 366-386 (IWNY…TMFC).

It belongs to the major facilitator superfamily. Set transporter family.

Its subcellular location is the cell inner membrane. Involved in the efflux of sugars. The physiological role may be the detoxification of non-metabolizable sugar analogs. Can transport lactose and glucose. The protein is Sugar efflux transporter B (setB) of Salmonella typhimurium (strain LT2 / SGSC1412 / ATCC 700720).